The chain runs to 132 residues: Minor structural pilin EpdB (132 aa).

Positions 1 to 4 are excised as a propeptide; it reads MSKG. Residues 9–19 carry the QXSXEXXXL motif; sequence EFIVLFLALLV.

In terms of processing, the N-terminus is probably cleaved by the prepilin peptidase EppA, which recognizes the class III signal sequence.

It localises to the secreted. Its subcellular location is the cell surface. The protein resides in the fimbrium. Functionally, minor component of the type IV-like pili. Essential for pili formation. The sequence is that of Minor structural pilin EpdB from Methanococcus maripaludis (strain DSM 14266 / JCM 13030 / NBRC 101832 / S2 / LL).